The primary structure comprises 144 residues: Large ribosomal subunit protein uL15 (144 aa).

A disordered region spans residues 20–49; that stretch reads GRGIGSGLGKTGGRGHKGQKSRSGGFHKVG. Residues 21 to 31 show a composition bias toward gly residues; the sequence is RGIGSGLGKTG.

The protein belongs to the universal ribosomal protein uL15 family. Part of the 50S ribosomal subunit.

In terms of biological role, binds to the 23S rRNA. In Neisseria meningitidis serogroup A / serotype 4A (strain DSM 15465 / Z2491), this protein is Large ribosomal subunit protein uL15.